Here is a 159-residue protein sequence, read N- to C-terminus: Phosphopantetheine adenylyltransferase (159 aa).

Residue threonine 10 coordinates substrate. ATP-binding positions include 10–11 and histidine 18; that span reads TF. Substrate contacts are provided by lysine 42, methionine 74, and arginine 88. ATP contacts are provided by residues 89–91, glutamate 99, and 124–130; these read GLR and WSFISSS.

This sequence belongs to the bacterial CoaD family. In terms of assembly, homohexamer. Mg(2+) is required as a cofactor.

It localises to the cytoplasm. It catalyses the reaction (R)-4'-phosphopantetheine + ATP + H(+) = 3'-dephospho-CoA + diphosphate. It functions in the pathway cofactor biosynthesis; coenzyme A biosynthesis; CoA from (R)-pantothenate: step 4/5. In terms of biological role, reversibly transfers an adenylyl group from ATP to 4'-phosphopantetheine, yielding dephospho-CoA (dPCoA) and pyrophosphate. The polypeptide is Phosphopantetheine adenylyltransferase (Escherichia coli (strain UTI89 / UPEC)).